The chain runs to 359 residues: Probable mannitol dehydrogenase (359 aa).

Zn(2+) is bound by residues cysteine 50, histidine 72, cysteine 103, cysteine 106, cysteine 109, cysteine 117, and cysteine 165.

Belongs to the zinc-containing alcohol dehydrogenase family. The cofactor is Zn(2+).

The enzyme catalyses D-mannitol + NAD(+) = D-mannose + NADH + H(+). In terms of biological role, oxidizes mannitol to mannose. Provides the initial step by which translocated mannitol is committed to central metabolism and, by regulating mannitol pool size, is important in regulating salt tolerance at the cellular level. The sequence is that of Probable mannitol dehydrogenase (CAD1) from Medicago sativa (Alfalfa).